Reading from the N-terminus, the 188-residue chain is RNA 2',3'-cyclic phosphodiesterase (188 aa).

Catalysis depends on histidine 42, which acts as the Proton donor. Short sequence motifs (HXTX) lie at residues 42-45 and 130-133; these read HMTL and HVTI. The active-site Proton acceptor is histidine 130.

It belongs to the 2H phosphoesterase superfamily. ThpR family.

It catalyses the reaction a 3'-end 2',3'-cyclophospho-ribonucleotide-RNA + H2O = a 3'-end 2'-phospho-ribonucleotide-RNA + H(+). Hydrolyzes RNA 2',3'-cyclic phosphodiester to an RNA 2'-phosphomonoester. The sequence is that of RNA 2',3'-cyclic phosphodiesterase from Aquifex aeolicus (strain VF5).